The chain runs to 210 residues: Uracil phosphoribosyltransferase (210 aa).

Residues Arg-80, Arg-105, and 132–140 contribute to the 5-phospho-alpha-D-ribose 1-diphosphate site; that span reads DPMLATGGS. Residues Ile-195 and 200–202 each bind uracil; that span reads GDA. Residue Asp-201 coordinates 5-phospho-alpha-D-ribose 1-diphosphate.

This sequence belongs to the UPRTase family. Mg(2+) serves as cofactor.

The enzyme catalyses UMP + diphosphate = 5-phospho-alpha-D-ribose 1-diphosphate + uracil. The protein operates within pyrimidine metabolism; UMP biosynthesis via salvage pathway; UMP from uracil: step 1/1. With respect to regulation, allosterically activated by GTP. Functionally, catalyzes the conversion of uracil and 5-phospho-alpha-D-ribose 1-diphosphate (PRPP) to UMP and diphosphate. The sequence is that of Uracil phosphoribosyltransferase from Thermoanaerobacter pseudethanolicus (strain ATCC 33223 / 39E) (Clostridium thermohydrosulfuricum).